The chain runs to 1059 residues: Carbamoyl phosphate synthase large chain (1059 aa).

The carboxyphosphate synthetic domain stretch occupies residues methionine 1–glutamate 401. ATP-binding residues include arginine 129, arginine 169, glycine 175, glycine 176, arginine 208, isoleucine 210, glutamate 215, glycine 241, isoleucine 242, histidine 243, glutamine 284, and glutamate 298. Residues lysine 133–valine 327 enclose the ATP-grasp 1 domain. Residues glutamine 284, glutamate 298, and asparagine 300 each contribute to the Mg(2+) site. The Mn(2+) site is built by glutamine 284, glutamate 298, and asparagine 300. The interval valine 402–serine 546 is oligomerization domain. A carbamoyl phosphate synthetic domain region spans residues valine 547–tyrosine 929. Positions glutamate 671–leucine 861 constitute an ATP-grasp 2 domain. Arginine 707, serine 746, isoleucine 748, glutamate 752, glycine 777, valine 778, histidine 779, serine 780, glutamine 820, and glutamate 832 together coordinate ATP. Residues glutamine 820, glutamate 832, and asparagine 834 each contribute to the Mg(2+) site. Residues glutamine 820, glutamate 832, and asparagine 834 each contribute to the Mn(2+) site. The 130-residue stretch at leucine 930 to isoleucine 1059 folds into the MGS-like domain. Residues leucine 930–isoleucine 1059 form an allosteric domain region.

Belongs to the CarB family. As to quaternary structure, composed of two chains; the small (or glutamine) chain promotes the hydrolysis of glutamine to ammonia, which is used by the large (or ammonia) chain to synthesize carbamoyl phosphate. Tetramer of heterodimers (alpha,beta)4. It depends on Mg(2+) as a cofactor. Mn(2+) serves as cofactor.

It carries out the reaction hydrogencarbonate + L-glutamine + 2 ATP + H2O = carbamoyl phosphate + L-glutamate + 2 ADP + phosphate + 2 H(+). The enzyme catalyses hydrogencarbonate + NH4(+) + 2 ATP = carbamoyl phosphate + 2 ADP + phosphate + 2 H(+). Its pathway is amino-acid biosynthesis; L-arginine biosynthesis; carbamoyl phosphate from bicarbonate: step 1/1. The protein operates within pyrimidine metabolism; UMP biosynthesis via de novo pathway; (S)-dihydroorotate from bicarbonate: step 1/3. In terms of biological role, large subunit of the glutamine-dependent carbamoyl phosphate synthetase (CPSase). CPSase catalyzes the formation of carbamoyl phosphate from the ammonia moiety of glutamine, carbonate, and phosphate donated by ATP, constituting the first step of 2 biosynthetic pathways, one leading to arginine and/or urea and the other to pyrimidine nucleotides. The large subunit (synthetase) binds the substrates ammonia (free or transferred from glutamine from the small subunit), hydrogencarbonate and ATP and carries out an ATP-coupled ligase reaction, activating hydrogencarbonate by forming carboxy phosphate which reacts with ammonia to form carbamoyl phosphate. The protein is Carbamoyl phosphate synthase large chain of Streptococcus sanguinis (strain SK36).